A 182-amino-acid chain; its full sequence is Lipoprotein signal peptidase (182 aa).

Helical transmembrane passes span 21-41 (LLLS…VLAV), 74-94 (GYTW…FWMG), and 98-118 (VSPW…GNLV). Catalysis depends on residues D134 and D148. The chain crosses the membrane as a helical span at residues 146-166 (VADPSVVGGAILLVVLSIFGY).

It belongs to the peptidase A8 family.

Its subcellular location is the cell membrane. It catalyses the reaction Release of signal peptides from bacterial membrane prolipoproteins. Hydrolyzes -Xaa-Yaa-Zaa-|-(S,diacylglyceryl)Cys-, in which Xaa is hydrophobic (preferably Leu), and Yaa (Ala or Ser) and Zaa (Gly or Ala) have small, neutral side chains.. It participates in protein modification; lipoprotein biosynthesis (signal peptide cleavage). Functionally, this protein specifically catalyzes the removal of signal peptides from prolipoproteins. This chain is Lipoprotein signal peptidase, found in Mycobacterium avium (strain 104).